The primary structure comprises 105 residues: Large ribosomal subunit protein bL21 (105 aa).

This sequence belongs to the bacterial ribosomal protein bL21 family. In terms of assembly, part of the 50S ribosomal subunit. Contacts protein L20.

In terms of biological role, this protein binds to 23S rRNA in the presence of protein L20. In Methylobacterium sp. (strain 4-46), this protein is Large ribosomal subunit protein bL21.